Reading from the N-terminus, the 263-residue chain is Hemin import ATP-binding protein HmuV (263 aa).

Residues Ile-2–Arg-242 form the ABC transporter domain. Gly-34–Thr-41 contacts ATP.

Belongs to the ABC transporter superfamily. Heme (hemin) importer (TC 3.A.1.14.5) family. The complex is composed of two ATP-binding proteins (HmuV), two transmembrane proteins (HmuU) and a solute-binding protein (HmuT).

The protein localises to the cell inner membrane. Part of the ABC transporter complex HmuTUV involved in hemin import. Responsible for energy coupling to the transport system. In Mesorhizobium japonicum (strain LMG 29417 / CECT 9101 / MAFF 303099) (Mesorhizobium loti (strain MAFF 303099)), this protein is Hemin import ATP-binding protein HmuV.